The primary structure comprises 206 residues: N-(5'-phosphoribosyl)anthranilate isomerase (206 aa).

Belongs to the TrpF family.

It catalyses the reaction N-(5-phospho-beta-D-ribosyl)anthranilate = 1-(2-carboxyphenylamino)-1-deoxy-D-ribulose 5-phosphate. It functions in the pathway amino-acid biosynthesis; L-tryptophan biosynthesis; L-tryptophan from chorismate: step 3/5. This is N-(5'-phosphoribosyl)anthranilate isomerase from Citrifermentans bemidjiense (strain ATCC BAA-1014 / DSM 16622 / JCM 12645 / Bem) (Geobacter bemidjiensis).